Reading from the N-terminus, the 372-residue chain is Putative glutamate--cysteine ligase 2 (372 aa).

This sequence belongs to the glutamate--cysteine ligase type 2 family. YbdK subfamily. Homodimer.

The catalysed reaction is L-cysteine + L-glutamate + ATP = gamma-L-glutamyl-L-cysteine + ADP + phosphate + H(+). Its function is as follows. ATP-dependent carboxylate-amine ligase which exhibits weak glutamate--cysteine ligase activity. This Salmonella paratyphi A (strain AKU_12601) protein is Putative glutamate--cysteine ligase 2 (ybdK).